The chain runs to 330 residues: Putative [LysW]-L-2-aminoadipate/[LysW]-L-glutamate phosphate reductase (330 aa).

NADP(+) contacts are provided by residues 10–13 and 34–36; these read SGYI and SRK. Cys142 is an active-site residue. Position 297 (Asn297) interacts with NADP(+).

This sequence belongs to the NAGSA dehydrogenase family. Type 1 subfamily. LysY sub-subfamily.

The protein resides in the cytoplasm. The enzyme catalyses [amino-group carrier protein]-C-terminal-N-(1-carboxy-5-oxopentan-1-yl)-L-glutamine + phosphate + NADP(+) = [amino-group carrier protein]-C-terminal-N-(1-carboxy-5-phosphooxy-5-oxopentan-1-yl)-L-glutamine + NADPH + H(+). It catalyses the reaction [amino-group carrier protein]-C-terminal-gamma-(L-glutamyl-5-semialdehyde)-L-glutamate + phosphate + NADP(+) = [amino-group carrier protein]-C-terminal-gamma-(5-phospho-L-glutamyl)-L-glutamate + NADPH + H(+). It participates in amino-acid biosynthesis; L-lysine biosynthesis via AAA pathway; L-lysine from L-alpha-aminoadipate (Thermus route): step 3/5. It functions in the pathway amino-acid biosynthesis; L-arginine biosynthesis. Its function is as follows. Involved in both the arginine and lysine biosynthetic pathways. This Pyrococcus abyssi (strain GE5 / Orsay) protein is Putative [LysW]-L-2-aminoadipate/[LysW]-L-glutamate phosphate reductase.